A 201-amino-acid polypeptide reads, in one-letter code: Probable calcium-binding protein CML15 (201 aa).

Residues 1–55 (MGKVRAFFSRKGRGNSSGRSRSMREAAMNVDWSPRPSDLAAAAAAKPRPPAAEDE) form a disordered region. 4 EF-hand domains span residues 51–86 (AAED…VGHA), 87–122 (VTDD…PPGD), 125–160 (AAEE…IGEA), and 161–196 (ATVA…GAGF). Ca(2+) contacts are provided by Asp64, Asn66, Asp68, Arg70, Glu75, Asp100, Asp102, Asp104, Tyr106, Glu111, Asp138, Asp140, Asn142, Glu149, Asp174, Asn176, Asp178, and Glu185.

In terms of biological role, potential calcium sensor. This Oryza sativa subsp. japonica (Rice) protein is Probable calcium-binding protein CML15 (CML15).